The following is an 84-amino-acid chain: Small ribosomal subunit protein uS17 (84 aa).

Belongs to the universal ribosomal protein uS17 family. As to quaternary structure, part of the 30S ribosomal subunit.

One of the primary rRNA binding proteins, it binds specifically to the 5'-end of 16S ribosomal RNA. The sequence is that of Small ribosomal subunit protein uS17 from Actinobacillus pleuropneumoniae serotype 5b (strain L20).